A 65-amino-acid polypeptide reads, in one-letter code: UPF0434 protein CC_0108 (65 aa).

Belongs to the UPF0434 family.

The protein is UPF0434 protein CC_0108 of Caulobacter vibrioides (strain ATCC 19089 / CIP 103742 / CB 15) (Caulobacter crescentus).